The sequence spans 199 residues: WASH complex subunit 3 (199 aa).

Residues 47–76 (VCEEKLSALSLRIQQIETTLNILEAKLSSI) are a coiled coil. Polar residues predominate over residues 93 to 120 (NISNGHLPSQPDAQSVVVSPQSDNNSMN). Disordered stretches follow at residues 93 to 136 (NISN…NITT) and 170 to 199 (PDLLETPDAPVPDGEPEAEESSDSESSFSD). A compositionally biased stretch (acidic residues) spans 183–192 (GEPEAEESSD).

Belongs to the CCDC53 family. Component of the WASH complex.

In Xenopus laevis (African clawed frog), this protein is WASH complex subunit 3.